A 30-amino-acid polypeptide reads, in one-letter code: Photosystem I reaction center subunit XII (30 aa).

The helical transmembrane segment at 7–26 (IFVALLFALVSAVLAIRLGT) threads the bilayer.

This sequence belongs to the PsaM family.

It localises to the plastid. The protein resides in the chloroplast thylakoid membrane. In Gracilaria tenuistipitata var. liui (Red alga), this protein is Photosystem I reaction center subunit XII.